A 456-amino-acid chain; its full sequence is Bifunctional protein GlmU (456 aa).

Positions 1–227 (MKLRVVILAA…AQEVEGANNR (227 aa)) are pyrophosphorylase. UDP-N-acetyl-alpha-D-glucosamine is bound by residues 8 to 11 (LAAG), Lys-22, Gln-73, 78 to 79 (GT), 100 to 102 (YGD), Gly-137, Glu-152, Asn-167, and Asn-225. Residue Asp-102 participates in Mg(2+) binding. Asn-225 is a binding site for Mg(2+). Residues 228-248 (QQLASLERALQQRQAEELMTQ) are linker. An N-acetyltransferase region spans residues 249–456 (GVTLIDPARF…WQRPQSKKGT (208 aa)). Residues Arg-331 and Lys-349 each contribute to the UDP-N-acetyl-alpha-D-glucosamine site. Residue His-361 is the Proton acceptor of the active site. 2 residues coordinate UDP-N-acetyl-alpha-D-glucosamine: Tyr-364 and Asn-375. Residues Ala-378, 384–385 (NY), Ser-403, Ala-421, and Arg-438 each bind acetyl-CoA.

The protein in the N-terminal section; belongs to the N-acetylglucosamine-1-phosphate uridyltransferase family. In the C-terminal section; belongs to the transferase hexapeptide repeat family. As to quaternary structure, homotrimer. Requires Mg(2+) as cofactor.

The protein localises to the cytoplasm. The catalysed reaction is alpha-D-glucosamine 1-phosphate + acetyl-CoA = N-acetyl-alpha-D-glucosamine 1-phosphate + CoA + H(+). It carries out the reaction N-acetyl-alpha-D-glucosamine 1-phosphate + UTP + H(+) = UDP-N-acetyl-alpha-D-glucosamine + diphosphate. Its pathway is nucleotide-sugar biosynthesis; UDP-N-acetyl-alpha-D-glucosamine biosynthesis; N-acetyl-alpha-D-glucosamine 1-phosphate from alpha-D-glucosamine 6-phosphate (route II): step 2/2. The protein operates within nucleotide-sugar biosynthesis; UDP-N-acetyl-alpha-D-glucosamine biosynthesis; UDP-N-acetyl-alpha-D-glucosamine from N-acetyl-alpha-D-glucosamine 1-phosphate: step 1/1. It participates in bacterial outer membrane biogenesis; LPS lipid A biosynthesis. Catalyzes the last two sequential reactions in the de novo biosynthetic pathway for UDP-N-acetylglucosamine (UDP-GlcNAc). The C-terminal domain catalyzes the transfer of acetyl group from acetyl coenzyme A to glucosamine-1-phosphate (GlcN-1-P) to produce N-acetylglucosamine-1-phosphate (GlcNAc-1-P), which is converted into UDP-GlcNAc by the transfer of uridine 5-monophosphate (from uridine 5-triphosphate), a reaction catalyzed by the N-terminal domain. This Idiomarina loihiensis (strain ATCC BAA-735 / DSM 15497 / L2-TR) protein is Bifunctional protein GlmU.